We begin with the raw amino-acid sequence, 287 residues long: uncharacterized protein (287 aa).

Helical transmembrane passes span Thr-4–Ala-24, Phe-36–Phe-56, Leu-66–Leu-86, Ser-93–Leu-113, Val-122–Gly-142, Leu-148–Ala-168, Val-179–Thr-199, Val-208–Phe-228, Gly-237–Ile-259, and Val-264–Ala-286. 2 EamA domains span residues Leu-16–Leu-139 and Val-158–Arg-284.

This sequence belongs to the EamA transporter family.

It is found in the cell membrane. This is an uncharacterized protein from Bacillus subtilis (strain 168).